The following is a 123-amino-acid chain: WAP four-disulfide core domain protein 2 (123 aa).

The first 28 residues, 1–28, serve as a signal peptide directing secretion; sequence MPASRLVPLGAVLLLGLLLLLELPPVTG. 2 WAP domains span residues 30-71 and 74-122; these read GADK…SAIC and PNEK…VTPN. 8 disulfide bridges follow: cysteine 37–cysteine 63, cysteine 46–cysteine 67, cysteine 50–cysteine 62, cysteine 56–cysteine 71, cysteine 81–cysteine 109, cysteine 92–cysteine 113, cysteine 96–cysteine 108, and cysteine 102–cysteine 118. Residue asparagine 45 is glycosylated (N-linked (GlcNAc...) asparagine).

Homotrimer; disulfide-linked. In terms of tissue distribution, epididymis.

Its subcellular location is the secreted. Broad range protease inhibitor. This is WAP four-disulfide core domain protein 2 (WFDC2) from Oryctolagus cuniculus (Rabbit).